Consider the following 454-residue polypeptide: Ribosomal protein uS12 methylthiotransferase RimO (454 aa).

The MTTase N-terminal domain occupies 14–125; that stretch reads SKVAFSHVGC…IAKVLDRVEK (112 aa). 6 residues coordinate [4Fe-4S] cluster: Cys-23, Cys-59, Cys-88, Cys-163, Cys-167, and Cys-170. A Radical SAM core domain is found at 149-378; sequence DKNKFVAYLR…ISVQQNISKD (230 aa). The 72-residue stretch at 381 to 452 folds into the TRAM domain; the sequence is QSYVGSKMKI…EYDLYGETIK (72 aa).

It belongs to the methylthiotransferase family. RimO subfamily. [4Fe-4S] cluster serves as cofactor.

Its subcellular location is the cytoplasm. It catalyses the reaction L-aspartate(89)-[ribosomal protein uS12]-hydrogen + (sulfur carrier)-SH + AH2 + 2 S-adenosyl-L-methionine = 3-methylsulfanyl-L-aspartate(89)-[ribosomal protein uS12]-hydrogen + (sulfur carrier)-H + 5'-deoxyadenosine + L-methionine + A + S-adenosyl-L-homocysteine + 2 H(+). Its function is as follows. Catalyzes the methylthiolation of an aspartic acid residue of ribosomal protein uS12. The chain is Ribosomal protein uS12 methylthiotransferase RimO from Prochlorococcus marinus (strain MIT 9312).